A 705-amino-acid polypeptide reads, in one-letter code: Pentatricopeptide repeat-containing protein At1g09410, mitochondrial (705 aa).

The transit peptide at 1-11 directs the protein to the mitochondrion; sequence MKSQILLRRTY. 15 PPR repeats span residues 16–46, 47–77, 78–112, 113–139, 140–170, 171–205, 206–232, 233–267, 268–294, 295–329, 330–364, 365–395, 396–430, 432–462, and 468–498; these read PPPT…CDSK, SISS…MPDR, NIIS…NVVS, WTAL…MPEK, NKVS…IPDK, DNIA…SVIT, WTTM…MPEK, TEVS…PVIA, CNAM…MKER, NDAS…GVRP, TFPT…QFDV, DVYV…FPSK, DIIM…GSTK, NEVT…MESV, and ITAH…MTVE. Positions 503 to 578 are type E motif; the sequence is VWGSLLGACR…SPGCSWTEVE (76 aa). Residues 579–610 are type E(+) motif; sequence NKVHAFTRGGINSHPEQESILKILDELDGLLR. The type DYW motif stretch occupies residues 611-705; the sequence is EAGYNPDCSY…NGECSCKDYW (95 aa).

The protein belongs to the PPR family. PCMP-H subfamily.

It localises to the mitochondrion. The polypeptide is Pentatricopeptide repeat-containing protein At1g09410, mitochondrial (PCMP-H18) (Arabidopsis thaliana (Mouse-ear cress)).